The chain runs to 2618 residues: Mediator of RNA polymerase II transcription subunit 13 (2618 aa).

3 stretches are compositionally biased toward low complexity: residues 232-255, 509-519, and 532-543; these read FAAASSPPGSNGSAASAGGAVPNP, TPASGTGSLSA, and DSKQLVQQQIQQ. Disordered regions lie at residues 232 to 279, 509 to 543, 569 to 731, 916 to 957, 970 to 995, 1036 to 1055, 1268 to 1384, 1521 to 1557, 1614 to 1633, and 1985 to 2060; these read FAAA…AAPP, TPASGTGSLSADGDENEQNKPPQDSKQLVQQQIQQ, GNTP…SGGP, LNIK…AEGL, TSSNDECSSVQIHTPPDSNNPSNGGC, TKMFPTPPSHEQQHPNSSPC, PRTP…TGVV, ASASMPGAGSGHGHGPNGGSNSSSCTPPSSNPHITGY, SRKNQNKQGPGETSSALDKI, and KTLL…GETK. A phosphothreonine mark is found at T571 and T575. Composition is skewed to polar residues over residues 581–590, 634–643, and 669–681; these read STYSRNSLGG, APTSVSNLQQ, and SITASPYVHQTPS. A compositionally biased stretch (gly residues) spans 692-706; the sequence is AGGGPAGGQGLGTGP. The segment covering 711–723 has biased composition (low complexity); that stretch reads AQQPATPTAATSA. Gly residues predominate over residues 939–949; the sequence is NSSGGGSGSGG. A compositionally biased stretch (polar residues) spans 1272–1295; it reads LTPSTVPQPLSSGGSQYLLNQLNC. Gly residues-rich tracts occupy residues 1375–1384 and 1528–1538; these read GLGGGATGVV and AGSGHGHGPNG. The segment covering 1539–1553 has biased composition (low complexity); sequence GSNSSSCTPPSSNPH. Over residues 1614-1629 the composition is skewed to polar residues; the sequence is SRKNQNKQGPGETSSA. A compositionally biased stretch (low complexity) spans 1993–2014; it reads GSGNSHSKGGSSCSSNSSSVSG. Phosphoserine is present on residues S2472 and S2475.

The protein belongs to the Mediator complex subunit 13 family. In terms of assembly, component of the Cdk8 module of the Mediator complex, composed of CycC, Cdk8, kto and skd.

It localises to the nucleus. Functionally, component of the Mediator complex, a coactivator involved in the regulated transcription of nearly all RNA polymerase II-dependent genes. Mediator functions as a bridge to convey information from gene-specific regulatory proteins to the basal RNA polymerase II transcription machinery. Mediator is recruited to promoters by direct interactions with regulatory proteins and serves as a scaffold for the assembly of a functional preinitiation complex with RNA polymerase II and the general transcription factors. Required for leg and eye development and macrochaete specification or differentiation. Negatively regulates sex comb development. Required for activated transcription of the MtnB and MtnD genes. The chain is Mediator of RNA polymerase II transcription subunit 13 (skd) from Drosophila melanogaster (Fruit fly).